A 325-amino-acid polypeptide reads, in one-letter code: Ribosomal large subunit pseudouridine synthase D (325 aa).

Positions 18–78 (YRLDQALAQL…AEIEEEIRFE (61 aa)) constitute an S4 RNA-binding domain. Aspartate 139 is a catalytic residue.

This sequence belongs to the pseudouridine synthase RluA family.

It localises to the cytoplasm. It catalyses the reaction uridine(1911/1915/1917) in 23S rRNA = pseudouridine(1911/1915/1917) in 23S rRNA. Functionally, responsible for synthesis of pseudouridine from uracil at positions 1911, 1915 and 1917 in 23S ribosomal RNA. This chain is Ribosomal large subunit pseudouridine synthase D (rluD), found in Haemophilus ducreyi (strain 35000HP / ATCC 700724).